The following is a 423-amino-acid chain: 3-phosphoshikimate 1-carboxyvinyltransferase (423 aa).

3-phosphoshikimate contacts are provided by Lys20, Ser21, and Arg25. Lys20 is a phosphoenolpyruvate binding site. 2 residues coordinate phosphoenolpyruvate: Gly91 and Arg119. 3-phosphoshikimate-binding residues include Thr163, Ser164, Gln165, Asp305, Gln328, and Lys332. Gln165 contacts phosphoenolpyruvate. Asp305 functions as the Proton acceptor in the catalytic mechanism. Phosphoenolpyruvate-binding residues include Arg336 and Arg377.

The protein belongs to the EPSP synthase family. Monomer.

The protein resides in the cytoplasm. It carries out the reaction 3-phosphoshikimate + phosphoenolpyruvate = 5-O-(1-carboxyvinyl)-3-phosphoshikimate + phosphate. Its pathway is metabolic intermediate biosynthesis; chorismate biosynthesis; chorismate from D-erythrose 4-phosphate and phosphoenolpyruvate: step 6/7. Its function is as follows. Catalyzes the transfer of the enolpyruvyl moiety of phosphoenolpyruvate (PEP) to the 5-hydroxyl of shikimate-3-phosphate (S3P) to produce enolpyruvyl shikimate-3-phosphate and inorganic phosphate. The polypeptide is 3-phosphoshikimate 1-carboxyvinyltransferase (Acetivibrio thermocellus (strain ATCC 27405 / DSM 1237 / JCM 9322 / NBRC 103400 / NCIMB 10682 / NRRL B-4536 / VPI 7372) (Clostridium thermocellum)).